A 585-amino-acid polypeptide reads, in one-letter code: Bifunctional lycopene cyclase/phytoene synthase (585 aa).

Residues 1-243 (MGFDYAIVHV…IVFGQLAFDN (243 aa)) are lycopene beta-cyclase. 7 helical membrane-spanning segments follow: residues 3–23 (FDYA…LTLL), 35–55 (KVLF…SYLI), 75–97 (IPLE…YLIL), 123–141 (LAGQ…LRVH), 151–171 (LIVV…YQFI), 173–193 (GLPW…LWLV), and 221–241 (IEEA…QLAF). The phytoene synthase stretch occupies residues 250-585 (TFPALFPKPP…AWRTLNKSIA (336 aa)).

This sequence in the N-terminal section; belongs to the lycopene beta-cyclase family. It in the C-terminal section; belongs to the phytoene/squalene synthase family.

The protein resides in the membrane. The enzyme catalyses all-trans-lycopene = gamma-carotene. The catalysed reaction is gamma-carotene = all-trans-beta-carotene. It carries out the reaction 2 (2E,6E,10E)-geranylgeranyl diphosphate = 15-cis-phytoene + 2 diphosphate. The protein operates within carotenoid biosynthesis; beta-carotene biosynthesis. It participates in carotenoid biosynthesis; phytoene biosynthesis; all-trans-phytoene from geranylgeranyl diphosphate: step 1/1. Its function is as follows. Bifunctional enzyme that catalyzes the reactions from geranylgeranyl diphosphate to phytoene (phytoene synthase) and lycopene to beta-carotene via the intermediate gamma-carotene (lycopene cyclase). This Phaeosphaeria nodorum (strain SN15 / ATCC MYA-4574 / FGSC 10173) (Glume blotch fungus) protein is Bifunctional lycopene cyclase/phytoene synthase.